The primary structure comprises 373 residues: L-threonine 3-dehydrogenase, mitochondrial (373 aa).

Residues 62–67 (GGLGQL), 88–90 (DIR), 106–107 (DI), Tyr195, Lys199, and Ile225 contribute to the NAD(+) site. The active-site Proton donor/acceptor is the Tyr195.

Belongs to the NAD(P)-dependent epimerase/dehydratase family. In terms of assembly, homodimer.

It localises to the mitochondrion. It carries out the reaction L-threonine + NAD(+) = (2S)-2-amino-3-oxobutanoate + NADH + H(+). It participates in amino-acid degradation; L-threonine degradation via oxydo-reductase pathway; glycine from L-threonine: step 1/2. Its function is as follows. Catalyzes the NAD(+)-dependent oxidation of L-threonine to 2-amino-3-ketobutyrate, mediating L-threonine catabolism. The protein is L-threonine 3-dehydrogenase, mitochondrial of Bos taurus (Bovine).